We begin with the raw amino-acid sequence, 570 residues long: Rho GTPase-activating protein gacEE (570 aa).

The PH domain occupies 127–233 (NSDISGVLLK…WVTTINNCID (107 aa)). A C2 domain is found at 224–343 (WVTTINNCID…PNGSEISLWL (120 aa)). Residues Asp260, Asp266, Asp312, Asp314, and Asp320 each contribute to the Ca(2+) site. A Rho-GAP domain is found at 381–567 (NSLEAIVKNR…FVFENSQQIL (187 aa)).

It depends on Ca(2+) as a cofactor.

The protein resides in the cytoplasm. Functionally, rho GTPase-activating protein involved in the signal transduction pathway. This Dictyostelium discoideum (Social amoeba) protein is Rho GTPase-activating protein gacEE (gacEE).